The primary structure comprises 234 residues: Ribose-5-phosphate isomerase A (234 aa).

Residues 28-31, 85-88, and 98-101 each bind substrate; these read TGST, DGAD, and KGLG. Catalysis depends on Glu-107, which acts as the Proton acceptor. A substrate-binding site is contributed by Lys-125.

Belongs to the ribose 5-phosphate isomerase family. Homodimer.

It carries out the reaction aldehydo-D-ribose 5-phosphate = D-ribulose 5-phosphate. Its pathway is carbohydrate degradation; pentose phosphate pathway; D-ribose 5-phosphate from D-ribulose 5-phosphate (non-oxidative stage): step 1/1. In terms of biological role, catalyzes the reversible conversion of ribose-5-phosphate to ribulose 5-phosphate. In Roseiflexus castenholzii (strain DSM 13941 / HLO8), this protein is Ribose-5-phosphate isomerase A.